Here is a 118-residue protein sequence, read N- to C-terminus: MARIAGINIPDHKHTVIALTGIFGIGRTRARAICAATSVAEDAKIKELSEAQIDTLREAVAEYTVEGDLRREVSMNIKRLMDLGCYRGIRHRRSLPLRGQRTKTNARTRKGPRKPIRK.

The interval 94–118 (SLPLRGQRTKTNARTRKGPRKPIRK) is disordered.

This sequence belongs to the universal ribosomal protein uS13 family. In terms of assembly, part of the 30S ribosomal subunit. Forms a loose heterodimer with protein S19. Forms two bridges to the 50S subunit in the 70S ribosome.

In terms of biological role, located at the top of the head of the 30S subunit, it contacts several helices of the 16S rRNA. In the 70S ribosome it contacts the 23S rRNA (bridge B1a) and protein L5 of the 50S subunit (bridge B1b), connecting the 2 subunits; these bridges are implicated in subunit movement. Contacts the tRNAs in the A and P-sites. The sequence is that of Small ribosomal subunit protein uS13 from Shewanella woodyi (strain ATCC 51908 / MS32).